The sequence spans 209 residues: CASP-like protein 1B1 (209 aa).

The segment covering 1 to 10 (MDLERGDKKP) has biased composition (basic and acidic residues). Positions 1-39 (MDLERGDKKPPPPPPPAPRTAAATTTTTTTPACSGKKRP) are disordered. Over 1–49 (MDLERGDKKPPPPPPPAPRTAAATTTTTTTPACSGKKRPPLRDSLVALQ) the chain is Cytoplasmic. The segment covering 19 to 32 (RTAAATTTTTTTPA) has biased composition (low complexity). Residues 50-70 (PVLLRAAAALAAAAAAAVMAL) traverse the membrane as a helical segment. Residues 71–100 (DAQSYTAVVAIVGTRPLTQTFTAKFSDTPA) are Extracellular-facing. A helical transmembrane segment spans residues 101–121 (FVYFVIANAIAAAYNLLVLLV). Residues 122–134 (RRRRRTTAGLVVR) are Cytoplasmic-facing. Residues 135–155 (MLDMVVMALLATGAAAAASMA) form a helical membrane-spanning segment. Residues 156 to 180 (ELGRNGNARARWNPVCDRFGSFCRR) lie on the Extracellular side of the membrane. The helical transmembrane segment at 181-201 (GGAALAASFVGVALMLALNLL) threads the bilayer. Residues 202–209 (SAASGAGC) are Cytoplasmic-facing.

The protein belongs to the Casparian strip membrane proteins (CASP) family. In terms of assembly, homodimer and heterodimers.

It is found in the cell membrane. This Zea mays (Maize) protein is CASP-like protein 1B1.